Reading from the N-terminus, the 271-residue chain is Tryptophan synthase alpha chain (271 aa).

Active-site proton acceptor residues include Glu-49 and Asp-60.

It belongs to the TrpA family. In terms of assembly, tetramer of two alpha and two beta chains.

The enzyme catalyses (1S,2R)-1-C-(indol-3-yl)glycerol 3-phosphate + L-serine = D-glyceraldehyde 3-phosphate + L-tryptophan + H2O. It functions in the pathway amino-acid biosynthesis; L-tryptophan biosynthesis; L-tryptophan from chorismate: step 5/5. The alpha subunit is responsible for the aldol cleavage of indoleglycerol phosphate to indole and glyceraldehyde 3-phosphate. This is Tryptophan synthase alpha chain from Paraburkholderia phymatum (strain DSM 17167 / CIP 108236 / LMG 21445 / STM815) (Burkholderia phymatum).